Reading from the N-terminus, the 212-residue chain is MGTNKPVVIGIAGGSGSGKTSVTKAIFDHFKGHSILILEQDYYYKDQSHLPMEERLKTNYDHPLAFDNDLLIEHLQQLLAYKQVEKPVYDYTLHTRSDEIIPVEPKDVIILEGILILEDPRLCELMDIKLFVDTDADLRILRRMQRDIKERGRTMDSVIDQYVNVVRPMHNQFIEPSKKFADIIIPEGGQNHVAIDIMVTKIATILEQKVNL.

An ATP-binding site is contributed by 13–20 (GGSGSGKT).

It belongs to the uridine kinase family.

It localises to the cytoplasm. It carries out the reaction uridine + ATP = UMP + ADP + H(+). The enzyme catalyses cytidine + ATP = CMP + ADP + H(+). It functions in the pathway pyrimidine metabolism; CTP biosynthesis via salvage pathway; CTP from cytidine: step 1/3. The protein operates within pyrimidine metabolism; UMP biosynthesis via salvage pathway; UMP from uridine: step 1/1. The polypeptide is Uridine kinase (Bacillus cereus (strain ATCC 10987 / NRS 248)).